We begin with the raw amino-acid sequence, 897 residues long: Alanine--tRNA ligase (897 aa).

Residues His591, His595, Cys695, and His699 each contribute to the Zn(2+) site.

The protein belongs to the class-II aminoacyl-tRNA synthetase family. Zn(2+) is required as a cofactor.

The protein resides in the cytoplasm. The catalysed reaction is tRNA(Ala) + L-alanine + ATP = L-alanyl-tRNA(Ala) + AMP + diphosphate. Catalyzes the attachment of alanine to tRNA(Ala) in a two-step reaction: alanine is first activated by ATP to form Ala-AMP and then transferred to the acceptor end of tRNA(Ala). Also edits incorrectly charged Ser-tRNA(Ala) and Gly-tRNA(Ala) via its editing domain. In Methanobrevibacter smithii (strain ATCC 35061 / DSM 861 / OCM 144 / PS), this protein is Alanine--tRNA ligase.